The chain runs to 64 residues: Large ribosomal subunit protein uL30 (64 aa).

This sequence belongs to the universal ribosomal protein uL30 family. As to quaternary structure, part of the 50S ribosomal subunit.

This is Large ribosomal subunit protein uL30 from Beijerinckia indica subsp. indica (strain ATCC 9039 / DSM 1715 / NCIMB 8712).